The following is a 497-amino-acid chain: Cytosol aminopeptidase (497 aa).

Residues lysine 267 and aspartate 272 each coordinate Mn(2+). Residue lysine 279 is part of the active site. Positions 290, 349, and 351 each coordinate Mn(2+). Arginine 353 is an active-site residue.

Belongs to the peptidase M17 family. The cofactor is Mn(2+).

The protein localises to the cytoplasm. It catalyses the reaction Release of an N-terminal amino acid, Xaa-|-Yaa-, in which Xaa is preferably Leu, but may be other amino acids including Pro although not Arg or Lys, and Yaa may be Pro. Amino acid amides and methyl esters are also readily hydrolyzed, but rates on arylamides are exceedingly low.. The catalysed reaction is Release of an N-terminal amino acid, preferentially leucine, but not glutamic or aspartic acids.. Functionally, presumably involved in the processing and regular turnover of intracellular proteins. Catalyzes the removal of unsubstituted N-terminal amino acids from various peptides. This is Cytosol aminopeptidase (pepA) from Pseudomonas putida (Arthrobacter siderocapsulatus).